A 979-amino-acid polypeptide reads, in one-letter code: Translation initiation factor IF-2 (979 aa).

A disordered region spans residues 68-392 (VKQKQGTPAS…SRAAQDAMEL (325 aa)). Basic and acidic residues-rich tracts occupy residues 102–179 (QDMR…KPEE), 217–229 (EMEK…EVFR), and 260–273 (TKED…DADG). Residues 309-326 (PSGNKNNNRPAQQQSNAS) show a composition bias toward polar residues. Over residues 347 to 356 (DVQRQVKETL) the composition is skewed to basic and acidic residues. Positions 478–646 (ARPPIVTVMG…KVLLEADILE (169 aa)) constitute a tr-type G domain. Positions 487 to 494 (GHVDHGKT) are G1. Residue 487–494 (GHVDHGKT) coordinates GTP. Residues 512 to 516 (GITQH) are G2. Residues 534–537 (DTPG) are G3. Residues 534 to 538 (DTPGH) and 588 to 591 (NKID) contribute to the GTP site. Residues 588-591 (NKID) form a G4 region. Residues 624 to 626 (SAK) form a G5 region.

This sequence belongs to the TRAFAC class translation factor GTPase superfamily. Classic translation factor GTPase family. IF-2 subfamily.

The protein localises to the cytoplasm. In terms of biological role, one of the essential components for the initiation of protein synthesis. Protects formylmethionyl-tRNA from spontaneous hydrolysis and promotes its binding to the 30S ribosomal subunits. Also involved in the hydrolysis of GTP during the formation of the 70S ribosomal complex. The polypeptide is Translation initiation factor IF-2 (Porphyromonas gingivalis (strain ATCC 33277 / DSM 20709 / CIP 103683 / JCM 12257 / NCTC 11834 / 2561)).